The sequence spans 296 residues: Phosphatidylserine decarboxylase proenzyme (296 aa).

Catalysis depends on charge relay system; for autoendoproteolytic cleavage activity residues D100, H157, and S263. The active-site Schiff-base intermediate with substrate; via pyruvic acid; for decarboxylase activity is S263. Residue S263 is modified to Pyruvic acid (Ser); by autocatalysis.

Belongs to the phosphatidylserine decarboxylase family. PSD-B subfamily. Prokaryotic type I sub-subfamily. In terms of assembly, heterodimer of a large membrane-associated beta subunit and a small pyruvoyl-containing alpha subunit. The cofactor is pyruvate. In terms of processing, is synthesized initially as an inactive proenzyme. Formation of the active enzyme involves a self-maturation process in which the active site pyruvoyl group is generated from an internal serine residue via an autocatalytic post-translational modification. Two non-identical subunits are generated from the proenzyme in this reaction, and the pyruvate is formed at the N-terminus of the alpha chain, which is derived from the carboxyl end of the proenzyme. The autoendoproteolytic cleavage occurs by a canonical serine protease mechanism, in which the side chain hydroxyl group of the serine supplies its oxygen atom to form the C-terminus of the beta chain, while the remainder of the serine residue undergoes an oxidative deamination to produce ammonia and the pyruvoyl prosthetic group on the alpha chain. During this reaction, the Ser that is part of the protease active site of the proenzyme becomes the pyruvoyl prosthetic group, which constitutes an essential element of the active site of the mature decarboxylase.

The protein resides in the cell membrane. It carries out the reaction a 1,2-diacyl-sn-glycero-3-phospho-L-serine + H(+) = a 1,2-diacyl-sn-glycero-3-phosphoethanolamine + CO2. It functions in the pathway phospholipid metabolism; phosphatidylethanolamine biosynthesis; phosphatidylethanolamine from CDP-diacylglycerol: step 2/2. In terms of biological role, catalyzes the formation of phosphatidylethanolamine (PtdEtn) from phosphatidylserine (PtdSer). The protein is Phosphatidylserine decarboxylase proenzyme of Actinobacillus pleuropneumoniae serotype 7 (strain AP76).